The chain runs to 499 residues: Trichothecene C-4 hydroxylase (499 aa).

A helical membrane pass occupies residues 7 to 29 (VGVAVQLVLTVLLASIPLRVIWN). 2 N-linked (GlcNAc...) asparagine glycosylation sites follow: Asn-173 and Asn-287. A heme-binding site is contributed by Cys-442. Asn-473 carries an N-linked (GlcNAc...) asparagine glycan.

Belongs to the cytochrome P450 family. It depends on heme as a cofactor.

The protein resides in the membrane. The protein operates within sesquiterpene biosynthesis; trichothecene biosynthesis. Trichothecene C-4 hydroxylase; part of the gene cluster that mediates the production of the antimicrobial trichothecene harzianum A (HA) that plays a role in Botrytis cinerea antagonistic activity and plant defense priming. The biosynthesis of harzianum A begins with the cyclization of farnesyl diphosphate to trichodiene and is catalyzed by the trichodiene synthase TRI5. Trichodiene undergoes a series of oxygenations catalyzed by the cytochrome P450 monooxygenase TRI4. TRI4 controls the addition of 3 oxygens at C-2, C-11, and the C-12, C-13-epoxide to form the intermediate isotrichodiol. Isotrichodiol then undergoes a non-enzymatic isomerization and cyclization to form 12,13-epoxytrichothec-9-ene (EPT) which is further converted to trichodermol by the cytochrome P450 monooxygenase TRI11 via C-4 hydroxylation. The last step of HA synthesis is esterification of an octatriendioyl moiety to the C-4 oxygen of trichodermol. The octatriendioyl moiety is probably produced by the polyketide synthase TRI17 and the esterification performed by the trichothecene O-acetyltransferase TRI3. In Trichoderma arundinaceum, this protein is Trichothecene C-4 hydroxylase.